The chain runs to 1239 residues: DNA topoisomerase 2 (1239 aa).

ATP is bound by residues Asn-65, Asn-96, 124 to 126 (SSN), 137 to 144 (GRHGYGAK), and 354 to 356 (QSK). Positions 434–548 (RTLIVTEGDS…SLLQHNPGYI (115 aa)) constitute a Toprim domain. Mg(2+)-binding residues include Glu-440, Asp-517, and Asp-519. The region spanning 685 to 1101 (IPHCVDGLKP…TPVKMWLTDL (417 aa)) is the Topo IIA-type catalytic domain. Tyr-775 functions as the O-(5'-phospho-DNA)-tyrosine intermediate in the catalytic mechanism. The segment at 956–965 (ALSQRIYING) is interaction with DNA. The segment at 1167-1206 (PASKRKPEDTYGGALSSGGSTRNVGKRLTGARGAKKKKVV) is disordered.

It belongs to the type II topoisomerase family. Homodimer. Requires Mg(2+) as cofactor. Mn(2+) is required as a cofactor. It depends on Ca(2+) as a cofactor.

It is found in the nucleus. The protein localises to the mitochondrion matrix. Its subcellular location is the kinetoplast. It catalyses the reaction ATP-dependent breakage, passage and rejoining of double-stranded DNA.. In terms of biological role, control of topological states of DNA by transient breakage and subsequent rejoining of DNA strands. Topoisomerase II makes double-strand breaks. In Crithidia fasciculata, this protein is DNA topoisomerase 2 (TOP2).